The chain runs to 33 residues: MSDIN-like toxin proprotein 1 (33 aa).

The propeptide occupies 1–10 (MSDINATRLP). The cyclopeptide (Ile-Pro) cross-link spans 11 to 18 (IIWAPVVP). A propeptide spanning residues 19-33 (CISDDNDSTLTRGQR) is cleaved from the precursor.

Belongs to the MSDIN fungal toxin family. In terms of processing, processed by the macrocyclase-peptidase enzyme POPB to yield a toxic cyclic octapeptide. POPB first removes 10 residues from the N-terminus. Conformational trapping of the remaining peptide forces the enzyme to release this intermediate rather than proceed to macrocyclization. The enzyme rebinds the remaining peptide in a different conformation and catalyzes macrocyclization of the N-terminal 8 residues.

Functionally, probable toxin that belongs to the MSDIN-like toxin family responsible for a large number of food poisoning cases and deaths. This chain is MSDIN-like toxin proprotein 1, found in Amanita fuliginea (East Asian brown death cap).